A 60-amino-acid polypeptide reads, in one-letter code: Acrosin (60 aa).

Asparagine 3 carries an N-linked (GlcNAc...) asparagine glycan. The Peptidase S1 domain maps to 24–60 (IIGGQDAAHGSWPWMVSLQIFTYHNNRRYHVCGGSLL).

This sequence belongs to the peptidase S1 family. Heavy chain (catalytic) and a light chain linked by two disulfide bonds. Forms a heterodimer with SERPINA5.

The enzyme catalyses Preferential cleavage: Arg-|-Xaa, Lys-|-Xaa.. Its activity is regulated as follows. Inhibited by SERPINA5. Acrosin is the major protease of mammalian spermatozoa. It is a serine protease of trypsin-like cleavage specificity, it is synthesized in a zymogen form, proacrosin and stored in the acrosome. The protein is Acrosin (ACR) of Capra hircus (Goat).